Consider the following 341-residue polypeptide: Ferredoxin--NADP reductase 2 (341 aa).

7 residues coordinate FAD: D42, Q50, Y55, I95, F129, D294, and S335.

Belongs to the ferredoxin--NADP reductase type 2 family. In terms of assembly, homodimer. It depends on FAD as a cofactor.

It carries out the reaction 2 reduced [2Fe-2S]-[ferredoxin] + NADP(+) + H(+) = 2 oxidized [2Fe-2S]-[ferredoxin] + NADPH. The chain is Ferredoxin--NADP reductase 2 from Chloroherpeton thalassium (strain ATCC 35110 / GB-78).